A 201-amino-acid polypeptide reads, in one-letter code: Small ribosomal subunit protein uS4 (201 aa).

One can recognise an S4 RNA-binding domain in the interval 92–155; sequence ARLDNVVFRL…KSLEVIANSL (64 aa).

It belongs to the universal ribosomal protein uS4 family. Part of the 30S ribosomal subunit. Contacts protein S5. The interaction surface between S4 and S5 is involved in control of translational fidelity.

In terms of biological role, one of the primary rRNA binding proteins, it binds directly to 16S rRNA where it nucleates assembly of the body of the 30S subunit. Its function is as follows. With S5 and S12 plays an important role in translational accuracy. This Phocaeicola vulgatus (strain ATCC 8482 / DSM 1447 / JCM 5826 / CCUG 4940 / NBRC 14291 / NCTC 11154) (Bacteroides vulgatus) protein is Small ribosomal subunit protein uS4.